The sequence spans 261 residues: Thiazole synthase (261 aa).

Lys97 acts as the Schiff-base intermediate with DXP in catalysis. Residues Gly158, 184-185 (AG), and 206-207 (AS) contribute to the 1-deoxy-D-xylulose 5-phosphate site.

Belongs to the ThiG family. In terms of assembly, homotetramer. Forms heterodimers with either ThiH or ThiS.

It localises to the cytoplasm. The catalysed reaction is [ThiS sulfur-carrier protein]-C-terminal-Gly-aminoethanethioate + 2-iminoacetate + 1-deoxy-D-xylulose 5-phosphate = [ThiS sulfur-carrier protein]-C-terminal Gly-Gly + 2-[(2R,5Z)-2-carboxy-4-methylthiazol-5(2H)-ylidene]ethyl phosphate + 2 H2O + H(+). It participates in cofactor biosynthesis; thiamine diphosphate biosynthesis. In terms of biological role, catalyzes the rearrangement of 1-deoxy-D-xylulose 5-phosphate (DXP) to produce the thiazole phosphate moiety of thiamine. Sulfur is provided by the thiocarboxylate moiety of the carrier protein ThiS. In vitro, sulfur can be provided by H(2)S. The polypeptide is Thiazole synthase (Corynebacterium diphtheriae (strain ATCC 700971 / NCTC 13129 / Biotype gravis)).